The primary structure comprises 255 residues: ATP synthase subunit a 2 (255 aa).

The next 5 helical transmembrane spans lie at 24–44, 86–106, 131–151, 205–225, and 226–246; these read WFGINLDSMIMVWLTGLVFIL, LIGPLALTIFVWVLLMNAVDL, DINITMSMALGVFILVLGYTF, MIFILIALMPWWMQWALSVPW, and ALFHILIVVLQAFIFMVLTVV.

This sequence belongs to the ATPase A chain family. F-type ATPases have 2 components, CF(1) - the catalytic core - and CF(0) - the membrane proton channel. CF(1) has five subunits: alpha(3), beta(3), gamma(1), delta(1), epsilon(1). CF(0) has three main subunits: a(1), b(2) and c(9-12). The alpha and beta chains form an alternating ring which encloses part of the gamma chain. CF(1) is attached to CF(0) by a central stalk formed by the gamma and epsilon chains, while a peripheral stalk is formed by the delta and b chains.

It is found in the cell inner membrane. In terms of biological role, key component of the proton channel; it plays a direct role in the translocation of protons across the membrane. This chain is ATP synthase subunit a 2, found in Vibrio campbellii (strain ATCC BAA-1116).